A 360-amino-acid polypeptide reads, in one-letter code: Photosystem II protein D1 (360 aa).

The next 3 membrane-spanning stretches (helical) occupy residues 29 to 46 (YIGW…TATS), 118 to 133 (HFLL…EWEL), and 142 to 156 (WISV…AAAA). His118 lines the chlorophyll a pocket. Tyr126 contributes to the pheophytin a binding site. 2 residues coordinate [CaMn4O5] cluster: Asp170 and Glu189. A helical membrane pass occupies residues 197–218 (FHQLGVAGVFGGSLFSAMHGSL). His198 contributes to the chlorophyll a binding site. Residues His215 and 264–265 (SF) contribute to the a quinone site. His215 contacts Fe cation. His272 serves as a coordination point for Fe cation. Residues 274–288 (FLGAWPVVGIWLTSM) form a helical membrane-spanning segment. Residues His332, Glu333, Asp342, and Ala344 each coordinate [CaMn4O5] cluster. Positions 345-360 (SGDSCPVALVAPSING) are excised as a propeptide.

It belongs to the reaction center PufL/M/PsbA/D family. In terms of assembly, PSII is composed of 1 copy each of membrane proteins PsbA, PsbB, PsbC, PsbD, PsbE, PsbF, PsbH, PsbI, PsbJ, PsbK, PsbL, PsbM, PsbT, PsbX, PsbY, PsbZ, Psb30/Ycf12, at least 3 peripheral proteins of the oxygen-evolving complex and a large number of cofactors. It forms dimeric complexes. The D1/D2 heterodimer binds P680, chlorophylls that are the primary electron donor of PSII, and subsequent electron acceptors. It shares a non-heme iron and each subunit binds pheophytin, quinone, additional chlorophylls, carotenoids and lipids. D1 provides most of the ligands for the Mn4-Ca-O5 cluster of the oxygen-evolving complex (OEC). There is also a Cl(-1) ion associated with D1 and D2, which is required for oxygen evolution. The PSII complex binds additional chlorophylls, carotenoids and specific lipids. is required as a cofactor. Tyr-161 forms a radical intermediate that is referred to as redox-active TyrZ, YZ or Y-Z. Post-translationally, C-terminally processed by CTPA; processing is essential to allow assembly of the oxygen-evolving complex and thus photosynthetic growth.

It is found in the plastid. It localises to the chloroplast thylakoid membrane. The catalysed reaction is 2 a plastoquinone + 4 hnu + 2 H2O = 2 a plastoquinol + O2. Its function is as follows. Photosystem II (PSII) is a light-driven water:plastoquinone oxidoreductase that uses light energy to abstract electrons from H(2)O, generating O(2) and a proton gradient subsequently used for ATP formation. It consists of a core antenna complex that captures photons, and an electron transfer chain that converts photonic excitation into a charge separation. The D1/D2 (PsbA/PsbD) reaction center heterodimer binds P680, the primary electron donor of PSII as well as several subsequent electron acceptors. The chain is Photosystem II protein D1 from Palmaria palmata (Dulse).